A 377-amino-acid polypeptide reads, in one-letter code: tRNA(Met) cytidine acetate ligase (377 aa).

Residues 7–20, Gly101, Asn151, and Arg176 contribute to the ATP site; that span reads VVEY…HRYH.

This sequence belongs to the TmcAL family.

It is found in the cytoplasm. The enzyme catalyses cytidine(34) in elongator tRNA(Met) + acetate + ATP = N(4)-acetylcytidine(34) in elongator tRNA(Met) + AMP + diphosphate. Catalyzes the formation of N(4)-acetylcytidine (ac(4)C) at the wobble position of elongator tRNA(Met), using acetate and ATP as substrates. First activates an acetate ion to form acetyladenylate (Ac-AMP) and then transfers the acetyl group to tRNA to form ac(4)C34. The protein is tRNA(Met) cytidine acetate ligase of Limosilactobacillus reuteri (strain DSM 20016) (Lactobacillus reuteri).